The primary structure comprises 24 residues: Defensin D5 (24 aa).

It belongs to the DEFL family. Group IV subfamily. Distributed in the epidermal cell layer of leaves and in the subepidermal layer region of stems. Not in roots.

The protein localises to the secreted. The protein resides in the cell wall. Its function is as follows. Antimicrobial peptide. Active against Fusarium spp., Gram-positive and Gram-negative bacterial pathogens. The polypeptide is Defensin D5 (Spinacia oleracea (Spinach)).